The following is a 150-amino-acid chain: MAEKFHILLLNGPNLNLLGTREPDKYGKTTLADIVSELETQAQALNVKFSHLQSNAEHVLIDTIHQARGNTDFILINPAAFTHTSVALRDALLAVSIPFIEIHLSNVHAREPFRHHSYLSDVAVGVICGLGADGYQYALQTAVKRLSTSN.

The Proton acceptor role is filled by tyrosine 26. Residues asparagine 77, histidine 83, and aspartate 90 each contribute to the substrate site. Histidine 103 acts as the Proton donor in catalysis. Substrate contacts are provided by residues 104-105 (LS) and arginine 114.

The protein belongs to the type-II 3-dehydroquinase family. In terms of assembly, homododecamer.

It carries out the reaction 3-dehydroquinate = 3-dehydroshikimate + H2O. Its pathway is metabolic intermediate biosynthesis; chorismate biosynthesis; chorismate from D-erythrose 4-phosphate and phosphoenolpyruvate: step 3/7. In terms of biological role, catalyzes a trans-dehydration via an enolate intermediate. The protein is 3-dehydroquinate dehydratase of Pectobacterium carotovorum subsp. carotovorum (strain PC1).